A 327-amino-acid chain; its full sequence is GPI-linked NAD(P)(+)--arginine ADP-ribosyltransferase 1 (327 aa).

The signal sequence occupies residues 1-22; the sequence is MWVPAVANLLLLSLGLLEAIQA. Disulfide bonds link Cys-53–Cys-277 and Cys-174–Cys-224. Asn-65 is a glycosylation site (N-linked (GlcNAc...) asparagine). The region spanning 73-273 is the TR mART core domain; sequence KVYADGWALA…IYLKALGKRS (201 aa). The NAD(+) site is built by Tyr-121 and Arg-179. Active-site residues include Arg-179 and Ser-202. Residue Ser-233 participates in NAD(+) binding. Residue Glu-240 is part of the active site. Asn-253 carries N-linked (GlcNAc...) asparagine glycosylation. Ser-295 is lipidated: GPI-anchor amidated serine. Positions 296 to 327 are cleaved as a propeptide — removed in mature form; it reads ASAQERLSTAWSLLLLLAFLAVGPFPGSPGLF.

It belongs to the Arg-specific ADP-ribosyltransferase family. As to expression, primarily in skeletal and cardiac muscle.

It localises to the sarcoplasmic reticulum membrane. The enzyme catalyses L-arginyl-[protein] + NAD(+) = N(omega)-(ADP-D-ribosyl)-L-arginyl-[protein] + nicotinamide + H(+). Its function is as follows. Has ADP-ribosyltransferase activity toward GLP1R. The protein is GPI-linked NAD(P)(+)--arginine ADP-ribosyltransferase 1 (ART1) of Oryctolagus cuniculus (Rabbit).